Consider the following 625-residue polypeptide: Inactive glucose-6-phosphate 1-dehydrogenase 4, chloroplastic (625 aa).

Residues 1–49 constitute a chloroplast transit peptide; it reads MSLSSCLLPFSQSATAPSSSVCSCHLAASFSNFPVSSRDYSFSRSGSLV. NADP(+)-binding positions include 160 to 167 and Arg-194; that span reads GATGELAR. A disulfide bridge links Cys-212 with Cys-220. An NADP(+)-binding site is contributed by Lys-297. Residues Lys-297, 327 to 331, Glu-365, and Asp-382 each bind D-glucose 6-phosphate; that span reads HMLGR. His-387 (proton acceptor) is an active-site residue. NADP(+)-binding residues include Arg-471, Arg-480, Arg-513, and Arg-606.

Belongs to the glucose-6-phosphate dehydrogenase family. In terms of assembly, forms homodimer. Interacts with G6PD1. Expressed in leaves, stems and buds.

The protein localises to the plastid. It is found in the chloroplast stroma. Seems to be a catalytically inactive enzyme. The protein is Inactive glucose-6-phosphate 1-dehydrogenase 4, chloroplastic of Arabidopsis thaliana (Mouse-ear cress).